Consider the following 416-residue polypeptide: Serine hydroxymethyltransferase (416 aa).

(6S)-5,6,7,8-tetrahydrofolate-binding positions include leucine 118 and 122 to 124 (GHL). Position 226 is an N6-(pyridoxal phosphate)lysine (lysine 226). (6S)-5,6,7,8-tetrahydrofolate-binding positions include glutamate 242 and 350–352 (SPF).

The protein belongs to the SHMT family. In terms of assembly, homodimer. Requires pyridoxal 5'-phosphate as cofactor.

It is found in the cytoplasm. The enzyme catalyses (6R)-5,10-methylene-5,6,7,8-tetrahydrofolate + glycine + H2O = (6S)-5,6,7,8-tetrahydrofolate + L-serine. Its pathway is one-carbon metabolism; tetrahydrofolate interconversion. The protein operates within amino-acid biosynthesis; glycine biosynthesis; glycine from L-serine: step 1/1. In terms of biological role, catalyzes the reversible interconversion of serine and glycine with tetrahydrofolate (THF) serving as the one-carbon carrier. This reaction serves as the major source of one-carbon groups required for the biosynthesis of purines, thymidylate, methionine, and other important biomolecules. Also exhibits THF-independent aldolase activity toward beta-hydroxyamino acids, producing glycine and aldehydes, via a retro-aldol mechanism. The chain is Serine hydroxymethyltransferase from Helicobacter acinonychis (strain Sheeba).